The primary structure comprises 458 residues: Zinc finger protein 19 (458 aa).

Residues 14–85 form the KRAB domain; that stretch reads VTFEDVAVHF…EAQDDPPAER (72 aa). 9 C2H2-type zinc fingers span residues 161-183, 189-211, 217-239, 245-267, 273-295, 301-323, 329-351, 357-379, and 385-407; these read FICE…QRIH, FECS…QRIH, YQCE…QRIH, YYCT…QRIH, YECN…QKIH, YECN…QRIH, YSCK…QRIH, FDCV…LRIH, and YVCD…QRIH. The C2H2-type 10; atypical zinc finger occupies 413 to 433; sequence YECSKYEKAFGTSSQLGHLEH.

This sequence belongs to the krueppel C2H2-type zinc-finger protein family.

It is found in the nucleus. Its function is as follows. May be involved in transcriptional regulation. The sequence is that of Zinc finger protein 19 (ZNF19) from Homo sapiens (Human).